We begin with the raw amino-acid sequence, 362 residues long: Phosphoserine aminotransferase (362 aa).

Position 43 (Arg-43) interacts with L-glutamate. Pyridoxal 5'-phosphate-binding positions include 77-78 (AR), Trp-103, Thr-153, Asp-173, and Gln-196. Position 197 is an N6-(pyridoxal phosphate)lysine (Lys-197).

This sequence belongs to the class-V pyridoxal-phosphate-dependent aminotransferase family. SerC subfamily. Homodimer. Pyridoxal 5'-phosphate serves as cofactor.

It localises to the cytoplasm. The enzyme catalyses O-phospho-L-serine + 2-oxoglutarate = 3-phosphooxypyruvate + L-glutamate. It carries out the reaction 4-(phosphooxy)-L-threonine + 2-oxoglutarate = (R)-3-hydroxy-2-oxo-4-phosphooxybutanoate + L-glutamate. Its pathway is amino-acid biosynthesis; L-serine biosynthesis; L-serine from 3-phospho-D-glycerate: step 2/3. It participates in cofactor biosynthesis; pyridoxine 5'-phosphate biosynthesis; pyridoxine 5'-phosphate from D-erythrose 4-phosphate: step 3/5. Its function is as follows. Catalyzes the reversible conversion of 3-phosphohydroxypyruvate to phosphoserine and of 3-hydroxy-2-oxo-4-phosphonooxybutanoate to phosphohydroxythreonine. The polypeptide is Phosphoserine aminotransferase (Legionella pneumophila subsp. pneumophila (strain Philadelphia 1 / ATCC 33152 / DSM 7513)).